The chain runs to 380 residues: MKVFKQQLEQLGAQNQYRSIPDLIHQGRYITRENRKMLNMSSNDYLGLASDENLRRSFLQQYGGNFPSFTSSSSRLLTGNFPIYTDLEELVAQRFQRESALLFNSGYHANLGILPALTTTKSLILADKFVHASMIDGIRLSRCAFFRYRHNDYEHLKNLLEKNVGKFDRTFIVTESVFSMDGDVADLKQLVQLKKQFPNTYLYVDEAHAIGVYGQNGLGIAERDNLIAEIDLLVGTFGKALASVGAYAVCNQVLKECLINQMRPLIFSTALPPFNVAWTYFIFERLPQFSKERSHLEQLSAFLRREVAHRTQIMPSQTCIVPYILGGNEATLAKAEYLQRQGYYCLPIRPSTVPKNTSRIRLSLTADMTTDEVRQFAACL.

Arginine 18 contacts substrate. A pyridoxal 5'-phosphate-binding site is contributed by 106-107 (GY). Histidine 131 lines the substrate pocket. Residues serine 179, 205 to 208 (DEAH), and 236 to 239 (TFGK) each bind pyridoxal 5'-phosphate. The residue at position 239 (lysine 239) is an N6-(pyridoxal phosphate)lysine. Threonine 352 provides a ligand contact to substrate.

This sequence belongs to the class-II pyridoxal-phosphate-dependent aminotransferase family. BioF subfamily. In terms of assembly, homodimer. Pyridoxal 5'-phosphate is required as a cofactor.

The enzyme catalyses 6-carboxyhexanoyl-[ACP] + L-alanine + H(+) = (8S)-8-amino-7-oxononanoate + holo-[ACP] + CO2. The protein operates within cofactor biosynthesis; biotin biosynthesis. Catalyzes the decarboxylative condensation of pimeloyl-[acyl-carrier protein] and L-alanine to produce 8-amino-7-oxononanoate (AON), [acyl-carrier protein], and carbon dioxide. This is Putative 8-amino-7-oxononanoate synthase (bioF) from Neisseria meningitidis serogroup B (strain ATCC BAA-335 / MC58).